The primary structure comprises 152 residues: Deoxyuridine 5'-triphosphate nucleotidohydrolase (152 aa).

Substrate contacts are provided by residues R71–G73, N84, L88–D90, and M98.

This sequence belongs to the dUTPase family. It depends on Mg(2+) as a cofactor.

The catalysed reaction is dUTP + H2O = dUMP + diphosphate + H(+). Its pathway is pyrimidine metabolism; dUMP biosynthesis; dUMP from dCTP (dUTP route): step 2/2. In terms of biological role, this enzyme is involved in nucleotide metabolism: it produces dUMP, the immediate precursor of thymidine nucleotides and it decreases the intracellular concentration of dUTP so that uracil cannot be incorporated into DNA. The sequence is that of Deoxyuridine 5'-triphosphate nucleotidohydrolase from Shewanella sediminis (strain HAW-EB3).